The chain runs to 417 residues: Serine hydroxymethyltransferase (417 aa).

Residues L122 and 126–128 contribute to the (6S)-5,6,7,8-tetrahydrofolate site; that span reads GHL. K230 carries the post-translational modification N6-(pyridoxal phosphate)lysine. 355-357 contacts (6S)-5,6,7,8-tetrahydrofolate; sequence SPF.

It belongs to the SHMT family. As to quaternary structure, homodimer. Requires pyridoxal 5'-phosphate as cofactor.

Its subcellular location is the cytoplasm. It carries out the reaction (6R)-5,10-methylene-5,6,7,8-tetrahydrofolate + glycine + H2O = (6S)-5,6,7,8-tetrahydrofolate + L-serine. It functions in the pathway one-carbon metabolism; tetrahydrofolate interconversion. Its pathway is amino-acid biosynthesis; glycine biosynthesis; glycine from L-serine: step 1/1. Its function is as follows. Catalyzes the reversible interconversion of serine and glycine with tetrahydrofolate (THF) serving as the one-carbon carrier. This reaction serves as the major source of one-carbon groups required for the biosynthesis of purines, thymidylate, methionine, and other important biomolecules. Also exhibits THF-independent aldolase activity toward beta-hydroxyamino acids, producing glycine and aldehydes, via a retro-aldol mechanism. The chain is Serine hydroxymethyltransferase from Francisella tularensis subsp. holarctica (strain LVS).